The sequence spans 162 residues: uncharacterized protein (162 aa).

A helical membrane pass occupies residues I5–S25.

The protein resides in the membrane. This is an uncharacterized protein from Methanocaldococcus jannaschii (strain ATCC 43067 / DSM 2661 / JAL-1 / JCM 10045 / NBRC 100440) (Methanococcus jannaschii).